The following is a 371-amino-acid chain: tRNA-specific 2-thiouridylase MnmA (371 aa).

ATP contacts are provided by residues 7–14 and Met-33; that span reads GLSGGVDS. The tract at residues 103-105 is interaction with target base in tRNA; the sequence is NPD. The Nucleophile role is filled by Cys-108. Cys-108 and Cys-201 form a disulfide bridge. Gly-133 is a binding site for ATP. An interaction with tRNA region spans residues 151–153; sequence KDQ. Cys-201 (cysteine persulfide intermediate) is an active-site residue. Residues 308 to 309 are interaction with tRNA; the sequence is RY.

The protein belongs to the MnmA/TRMU family.

It is found in the cytoplasm. It catalyses the reaction S-sulfanyl-L-cysteinyl-[protein] + uridine(34) in tRNA + AH2 + ATP = 2-thiouridine(34) in tRNA + L-cysteinyl-[protein] + A + AMP + diphosphate + H(+). In terms of biological role, catalyzes the 2-thiolation of uridine at the wobble position (U34) of tRNA, leading to the formation of s(2)U34. The protein is tRNA-specific 2-thiouridylase MnmA of Mycoplasmopsis pulmonis (strain UAB CTIP) (Mycoplasma pulmonis).